The sequence spans 120 residues: Ribosome-binding factor A (120 aa).

The protein belongs to the RbfA family. As to quaternary structure, monomer. Binds 30S ribosomal subunits, but not 50S ribosomal subunits or 70S ribosomes.

Its subcellular location is the cytoplasm. Functionally, one of several proteins that assist in the late maturation steps of the functional core of the 30S ribosomal subunit. Associates with free 30S ribosomal subunits (but not with 30S subunits that are part of 70S ribosomes or polysomes). Required for efficient processing of 16S rRNA. May interact with the 5'-terminal helix region of 16S rRNA. This is Ribosome-binding factor A from Chlorobaculum tepidum (strain ATCC 49652 / DSM 12025 / NBRC 103806 / TLS) (Chlorobium tepidum).